Consider the following 197-residue polypeptide: Signal-regulatory protein delta (197 aa).

An N-terminal signal peptide occupies residues 1–29 (MPIPASPLHPPLPSLLLYLLLELAGVTHV). The Ig-like V-type domain maps to 31–135 (HVQQTEMSQT…IKEYQSGRGT (105 aa)). Cysteine 51 and cysteine 117 form a disulfide bridge. Positions 139 to 158 (VTEQNPRPPKNRPAGRAGSR) are disordered. A glycan (N-linked (GlcNAc...) asparagine) is linked at asparagine 174.

Its subcellular location is the secreted. In Homo sapiens (Human), this protein is Signal-regulatory protein delta (SIRPD).